Reading from the N-terminus, the 144-residue chain is Probable calcium-binding protein CML31 (144 aa).

EF-hand domains follow at residues 1-31, 32-67, 72-107, and 108-143; these read MAEI…FSPQ, ITSE…NGGG, EEEV…LGEK, and HTME…NKES. The Ca(2+) site is built by D45, D47, D49, Q51, E56, D85, D87, D89, K91, E96, D121, D123, D125, and E132.

In terms of biological role, potential calcium sensor. The sequence is that of Probable calcium-binding protein CML31 (CML31) from Arabidopsis thaliana (Mouse-ear cress).